The following is a 143-amino-acid chain: Peptide methionine sulfoxide reductase MsrB (143 aa).

The region spanning 16–139 is the MsrB domain; sequence DAELRRRLTP…NSAALNFESR (124 aa). Zn(2+) contacts are provided by Cys-55, Cys-58, Cys-104, and Cys-107. The Nucleophile role is filled by Cys-128.

It belongs to the MsrB Met sulfoxide reductase family. The cofactor is Zn(2+).

It catalyses the reaction L-methionyl-[protein] + [thioredoxin]-disulfide + H2O = L-methionyl-(R)-S-oxide-[protein] + [thioredoxin]-dithiol. The protein is Peptide methionine sulfoxide reductase MsrB of Burkholderia vietnamiensis (strain G4 / LMG 22486) (Burkholderia cepacia (strain R1808)).